Here is a 102-residue protein sequence, read N- to C-terminus: Small ribosomal subunit protein uS10 (102 aa).

The protein belongs to the universal ribosomal protein uS10 family. In terms of assembly, part of the 30S ribosomal subunit.

Involved in the binding of tRNA to the ribosomes. This is Small ribosomal subunit protein uS10 from Clostridium botulinum (strain ATCC 19397 / Type A).